Here is a 335-residue protein sequence, read N- to C-terminus: Ketol-acid reductoisomerase (NADP(+)) (335 aa).

Residues 5-185 enclose the KARI N-terminal Rossmann domain; it reads SKIYTDKDSN…GATRAGVIPT (181 aa). NADP(+) is bound by residues 28-31, Ser-56, and 86-89; these read YGSQ and DMVQ. His-111 is an active-site residue. Gly-137 is an NADP(+) binding site. Residues 186-331 form the KARI C-terminal knotted domain; the sequence is TFKEETETDL…NQLKDLIQKG (146 aa). Mg(2+)-binding residues include Asp-194, Glu-198, Glu-230, and Glu-234. Ser-255 provides a ligand contact to substrate.

The protein belongs to the ketol-acid reductoisomerase family. It depends on Mg(2+) as a cofactor.

The catalysed reaction is (2R)-2,3-dihydroxy-3-methylbutanoate + NADP(+) = (2S)-2-acetolactate + NADPH + H(+). It carries out the reaction (2R,3R)-2,3-dihydroxy-3-methylpentanoate + NADP(+) = (S)-2-ethyl-2-hydroxy-3-oxobutanoate + NADPH + H(+). It functions in the pathway amino-acid biosynthesis; L-isoleucine biosynthesis; L-isoleucine from 2-oxobutanoate: step 2/4. Its pathway is amino-acid biosynthesis; L-valine biosynthesis; L-valine from pyruvate: step 2/4. Functionally, involved in the biosynthesis of branched-chain amino acids (BCAA). Catalyzes an alkyl-migration followed by a ketol-acid reduction of (S)-2-acetolactate (S2AL) to yield (R)-2,3-dihydroxy-isovalerate. In the isomerase reaction, S2AL is rearranged via a Mg-dependent methyl migration to produce 3-hydroxy-3-methyl-2-ketobutyrate (HMKB). In the reductase reaction, this 2-ketoacid undergoes a metal-dependent reduction by NADPH to yield (R)-2,3-dihydroxy-isovalerate. This chain is Ketol-acid reductoisomerase (NADP(+)), found in Saccharolobus islandicus (strain M.16.27) (Sulfolobus islandicus).